The chain runs to 597 residues: MRSHYCGDVNKSHVGQEVTLVGWVNRSRDLGGVVFLDLRDREGIVQVVYDPDLPEVFDVASTLRSEFCVQIKGLVRARPDSQINADMRTGEVEILGLELTILNSSAPLPINMDKNQHNTEEQRLKYRYLDLRRPEMADRIVFRSKVTSAVRRFLDGNGFLDIETPILTKATPEGARDYLVPSRTYKGQFFALPQSPQLFKQLLMMSGFDRYYQIVKCFRDEDLRADRQPEFTQIDIETSFMTSAQVMDKTEEMVRGLFKELLNVDLGEFPKMTFEEAMRRFGSDKPDLRNPLELIDVADIVKEVEFAVFNGPANDPEGRVAVLSIPGGAKLSRKQLDEYAKYVTIYGAKGLAWMKVNDLAQGMEGIQSPVLKFLSEDVVNALLERTGAQTGDLILFGADKANIVAEAMGALRLKAGEDFDLLQGEWKPLWVVDFPMFERTSDGGLHAMHHPFTAPSNMTPEELEANPIGAISDAYDMVLNGCELGGGSVRIHDSKMQSAVFRILGINDEEASEKFGFLLEALRYGTPPHAGLAFGLDRIIMLMTGASSIRDVMAFPKTTTAACPLTNAPGFANPVQLAELGVSVVEAEPKADAKDTE.

Residue Glu-173 participates in L-aspartate binding. The aspartate stretch occupies residues 197 to 200 (QLFK). An L-aspartate-binding site is contributed by Arg-219. ATP-binding positions include 219–221 (RDE) and Gln-228. An L-aspartate-binding site is contributed by His-449. Residue Glu-483 coordinates ATP. Position 490 (Arg-490) interacts with L-aspartate. 535–538 (GLDR) lines the ATP pocket.

Belongs to the class-II aminoacyl-tRNA synthetase family. Type 1 subfamily. As to quaternary structure, homodimer.

The protein localises to the cytoplasm. It catalyses the reaction tRNA(Asp) + L-aspartate + ATP = L-aspartyl-tRNA(Asp) + AMP + diphosphate. Functionally, catalyzes the attachment of L-aspartate to tRNA(Asp) in a two-step reaction: L-aspartate is first activated by ATP to form Asp-AMP and then transferred to the acceptor end of tRNA(Asp). The sequence is that of Aspartate--tRNA ligase from Shewanella pealeana (strain ATCC 700345 / ANG-SQ1).